The sequence spans 416 residues: Gamma-glutamyl phosphate reductase (416 aa).

This sequence belongs to the gamma-glutamyl phosphate reductase family.

The protein localises to the cytoplasm. It carries out the reaction L-glutamate 5-semialdehyde + phosphate + NADP(+) = L-glutamyl 5-phosphate + NADPH + H(+). It participates in amino-acid biosynthesis; L-proline biosynthesis; L-glutamate 5-semialdehyde from L-glutamate: step 2/2. Its function is as follows. Catalyzes the NADPH-dependent reduction of L-glutamate 5-phosphate into L-glutamate 5-semialdehyde and phosphate. The product spontaneously undergoes cyclization to form 1-pyrroline-5-carboxylate. This chain is Gamma-glutamyl phosphate reductase, found in Streptococcus pyogenes serotype M6 (strain ATCC BAA-946 / MGAS10394).